We begin with the raw amino-acid sequence, 479 residues long: Anaerobic nitric oxide reductase flavorubredoxin (479 aa).

Positions 30–210 are zinc metallo-hydrolase; sequence LRGSSYNSYL…PFSRLVTPKI (181 aa). The Fe cation site is built by His-79, Glu-81, Asp-83, His-147, Asp-166, and His-227. One can recognise a Flavodoxin-like domain in the interval 254-393; it reads ITIFYDTMSN…LCREHGREIA (140 aa). FMN contacts are provided by residues 260-264 and 342-369; these read TMSNN and AFGSHGWSGGAVDRLSTRLQDAGFEMSL. The Rubredoxin-like domain occupies 423 to 474; it reads GPRMQCSVCQWIYDPAKGEPMQDVAPGTPWSEVPDNFLCPECSLGKDVFDEL. Fe cation contacts are provided by Cys-428, Cys-431, Cys-461, and Cys-464.

It in the N-terminal section; belongs to the zinc metallo-hydrolase group 3 family. Homotetramer. It depends on Fe cation as a cofactor. The cofactor is FMN.

The protein resides in the cytoplasm. Its pathway is nitrogen metabolism; nitric oxide reduction. Functionally, anaerobic nitric oxide reductase; uses NADH to detoxify nitric oxide (NO), protecting several 4Fe-4S NO-sensitive enzymes. Has at least 2 reductase partners, only one of which (NorW, flavorubredoxin reductase) has been identified. NO probably binds to the di-iron center; electrons enter from the NorW at rubredoxin and are transferred sequentially to the FMN center and the di-iron center. Also able to function as an aerobic oxygen reductase. The chain is Anaerobic nitric oxide reductase flavorubredoxin from Escherichia coli (strain SMS-3-5 / SECEC).